The primary structure comprises 923 residues: Calmodulin-binding transcription activator 5 (923 aa).

A DNA-binding region (CG-1) is located at residues 25–151 (IQTMLDEAYS…YRETHEVHAA (127 aa)). The segment at 272-372 (VYQNNNSCGA…HSHSDIPEQV (101 aa)) is transcription activation. One copy of the ANK repeat lies at 611–640 (QGWTALHWAAYYGREKMVAALLSAGARPNL). 3 consecutive IQ domains span residues 757 to 786 (NIIA…IQYR), 799 to 828 (MRKK…SVGV), and 875 to 904 (LERS…AHEE). The segment at 824-846 (WSVGVLEKAILRWRLKRKGFRGL) is calmodulin-binding. Residues 887 to 914 (RSKKAQQDYRRMKLAHEEAQLEYDGMQE) are a coiled coil.

Belongs to the CAMTA family. Expressed in roots, stems, leaves, pollen, top of sepals and siliques.

The protein resides in the nucleus. In terms of biological role, transcription activator. Binds to the DNA consensus sequence 5'-[ACG]CGCG[GTC]-3'. Regulates transcriptional activity in response to calcium signals. Binds calmodulin in a calcium-dependent manner. Involved in response to cold. Contributes together with CAMTA3 to the positive regulation of the cold-induced expression of DREB1A/CBF3, DREB1B/CBF1 and DREB1C/CBF2. This is Calmodulin-binding transcription activator 5 from Arabidopsis thaliana (Mouse-ear cress).